The primary structure comprises 505 residues: Succinyl-CoA:acetate CoA-transferase (505 aa).

269-273 contributes to the CoA binding site; sequence GVGNV. The active-site 5-glutamyl coenzyme A thioester intermediate is the Glu294. 4 residues coordinate CoA: Ile364, Asn384, Gly388, and Lys408.

The protein belongs to the acetyl-CoA hydrolase/transferase family. Homodimer.

The catalysed reaction is succinyl-CoA + acetate = succinate + acetyl-CoA. Its pathway is metabolic intermediate biosynthesis; acetyl-CoA biosynthesis. Subject to competitive inhibition by coenzyme A (CoA). Its function is as follows. Utilizes succinyl-CoA to convert toxic acetate to acetyl-CoA and succinate. Required for growth on acetic acid and for resistance to high levels of acetic acid. Also has low activity with acetoacetate as substrate. The protein is Succinyl-CoA:acetate CoA-transferase of Acetobacter aceti.